We begin with the raw amino-acid sequence, 204 residues long: Leucyl/phenylalanyl-tRNA--protein transferase (204 aa).

This sequence belongs to the L/F-transferase family.

The protein localises to the cytoplasm. It carries out the reaction N-terminal L-lysyl-[protein] + L-leucyl-tRNA(Leu) = N-terminal L-leucyl-L-lysyl-[protein] + tRNA(Leu) + H(+). The catalysed reaction is N-terminal L-arginyl-[protein] + L-leucyl-tRNA(Leu) = N-terminal L-leucyl-L-arginyl-[protein] + tRNA(Leu) + H(+). It catalyses the reaction L-phenylalanyl-tRNA(Phe) + an N-terminal L-alpha-aminoacyl-[protein] = an N-terminal L-phenylalanyl-L-alpha-aminoacyl-[protein] + tRNA(Phe). Functionally, functions in the N-end rule pathway of protein degradation where it conjugates Leu, Phe and, less efficiently, Met from aminoacyl-tRNAs to the N-termini of proteins containing an N-terminal arginine or lysine. In Agrobacterium fabrum (strain C58 / ATCC 33970) (Agrobacterium tumefaciens (strain C58)), this protein is Leucyl/phenylalanyl-tRNA--protein transferase.